A 690-amino-acid polypeptide reads, in one-letter code: Cysteine-rich receptor-like protein kinase 21 (690 aa).

The N-terminal stretch at 1 to 24 (MQKNKMVDLRAIFWFVVISSCAVA) is a signal peptide. The 105-residue stretch at 25 to 129 (APTCIQRSDF…CLVRYSNHLI (105 aa)) folds into the Gnk2-homologous 1 domain. Residues 25-281 (APTCIQRSDF…KDGKNISTGS (257 aa)) lie on the Extracellular side of the membrane. N-linked (GlcNAc...) asparagine glycans are attached at residues Asn-130, Asn-148, Asn-155, Asn-220, Asn-268, and Asn-276. The region spanning 140 to 246 (AEYIEYKYNT…CFMRWDLQPF (107 aa)) is the Gnk2-homologous 2 domain. A helical membrane pass occupies residues 282–302 (IVAIAVVSVVVSTVLLALGYA). At 303–690 (VSRRRKAYQS…DASITSVRPR (388 aa)) the chain is on the cytoplasmic side. The region spanning 363–640 (FHKSNKLGHG…IFRMLTNVSI (278 aa)) is the Protein kinase domain. Residues 369–377 (LGHGGFGAV) and Lys-391 each bind ATP. Tyr-436 carries the post-translational modification Phosphotyrosine. Asp-488 serves as the catalytic Proton acceptor. Ser-492 is modified (phosphoserine). Residue Thr-528 is modified to Phosphothreonine. Tyr-536 is modified (phosphotyrosine).

Belongs to the protein kinase superfamily. Ser/Thr protein kinase family. CRK subfamily.

It is found in the membrane. It carries out the reaction L-seryl-[protein] + ATP = O-phospho-L-seryl-[protein] + ADP + H(+). The enzyme catalyses L-threonyl-[protein] + ATP = O-phospho-L-threonyl-[protein] + ADP + H(+). This Arabidopsis thaliana (Mouse-ear cress) protein is Cysteine-rich receptor-like protein kinase 21 (CRK21).